The primary structure comprises 61 residues: Protein A40 homolog (61 aa).

Residues 1 to 11 (MTMNKPKTNYA) are Cytoplasmic-facing. A helical; Signal-anchor for type II membrane protein membrane pass occupies residues 12 to 32 (GYACCVICGLIVGIIFTATLL). The Extracellular portion of the chain corresponds to 33–61 (KAVERKLIHTPLIDKTIKDAYIREDCPTD).

This sequence belongs to the poxviridae A40 protein family.

Its subcellular location is the host membrane. This chain is Protein A40 homolog (A45R), found in Homo sapiens (Human).